The primary structure comprises 133 residues: Ribosome-binding factor A (133 aa).

The protein belongs to the RbfA family. As to quaternary structure, monomer. Binds 30S ribosomal subunits, but not 50S ribosomal subunits or 70S ribosomes.

The protein resides in the cytoplasm. Its function is as follows. One of several proteins that assist in the late maturation steps of the functional core of the 30S ribosomal subunit. Associates with free 30S ribosomal subunits (but not with 30S subunits that are part of 70S ribosomes or polysomes). Required for efficient processing of 16S rRNA. May interact with the 5'-terminal helix region of 16S rRNA. The protein is Ribosome-binding factor A of Salmonella typhi.